A 100-amino-acid chain; its full sequence is Small ribosomal subunit protein bS21 (100 aa).

Residues 61-100 (KLQREGLLPMKPKPVFGAGPGGDRGRGPAAGAGAGPRGPR) form a disordered region. A compositionally biased stretch (gly residues) spans 78-100 (AGPGGDRGRGPAAGAGAGPRGPR).

Belongs to the bacterial ribosomal protein bS21 family.

In Rhodopseudomonas palustris (strain BisB18), this protein is Small ribosomal subunit protein bS21.